The chain runs to 160 residues: uncharacterized protein (160 aa).

It is found in the cytoplasm. It localises to the nucleus. This is an uncharacterized protein from Schizosaccharomyces pombe (strain 972 / ATCC 24843) (Fission yeast).